The sequence spans 218 residues: Large ribosomal subunit protein eL13 (218 aa).

The interval 196 to 218 (AKRAKEAAESEDAAKGDPKKAKK) is disordered. Residues 199–218 (AKEAAESEDAAKGDPKKAKK) are compositionally biased toward basic and acidic residues.

The protein belongs to the eukaryotic ribosomal protein eL13 family. Component of the 60S large ribosomal subunit (LSU).

The protein localises to the cytoplasm. Its function is as follows. Component of the ribosome, a large ribonucleoprotein complex responsible for the synthesis of proteins in the cell. The small ribosomal subunit (SSU) binds messenger RNAs (mRNAs) and translates the encoded message by selecting cognate aminoacyl-transfer RNA (tRNA) molecules. The large subunit (LSU) contains the ribosomal catalytic site termed the peptidyl transferase center (PTC), which catalyzes the formation of peptide bonds, thereby polymerizing the amino acids delivered by tRNAs into a polypeptide chain. The nascent polypeptides leave the ribosome through a tunnel in the LSU and interact with protein factors that function in enzymatic processing, targeting, and the membrane insertion of nascent chains at the exit of the ribosomal tunnel. As part of the LSU, it is probably required for its formation and the maturation of rRNAs. This chain is Large ribosomal subunit protein eL13 (RpL13), found in Drosophila melanogaster (Fruit fly).